The primary structure comprises 211 residues: Probable nicotinate-nucleotide adenylyltransferase (211 aa).

Belongs to the NadD family.

It carries out the reaction nicotinate beta-D-ribonucleotide + ATP + H(+) = deamido-NAD(+) + diphosphate. The protein operates within cofactor biosynthesis; NAD(+) biosynthesis; deamido-NAD(+) from nicotinate D-ribonucleotide: step 1/1. In terms of biological role, catalyzes the reversible adenylation of nicotinate mononucleotide (NaMN) to nicotinic acid adenine dinucleotide (NaAD). The chain is Probable nicotinate-nucleotide adenylyltransferase from Corynebacterium kroppenstedtii (strain DSM 44385 / JCM 11950 / CIP 105744 / CCUG 35717).